Here is a 452-residue protein sequence, read N- to C-terminus: tRNA modification GTPase MnmE (452 aa).

(6S)-5-formyl-5,6,7,8-tetrahydrofolate-binding residues include arginine 21, glutamate 78, and lysine 118. The TrmE-type G domain maps to 214-375; sequence GMKVVIAGRP…LREHLKQSMG (162 aa). Position 224 (asparagine 224) interacts with K(+). GTP contacts are provided by residues 224–229, 243–249, and 268–271; these read NAGKSS, TDIAGTT, and DTAG. Position 228 (serine 228) interacts with Mg(2+). Residues threonine 243, isoleucine 245, and threonine 248 each coordinate K(+). Position 249 (threonine 249) interacts with Mg(2+). Lysine 452 provides a ligand contact to (6S)-5-formyl-5,6,7,8-tetrahydrofolate.

Belongs to the TRAFAC class TrmE-Era-EngA-EngB-Septin-like GTPase superfamily. TrmE GTPase family. In terms of assembly, homodimer. Heterotetramer of two MnmE and two MnmG subunits. K(+) serves as cofactor.

It is found in the cytoplasm. Functionally, exhibits a very high intrinsic GTPase hydrolysis rate. Involved in the addition of a carboxymethylaminomethyl (cmnm) group at the wobble position (U34) of certain tRNAs, forming tRNA-cmnm(5)s(2)U34. The polypeptide is tRNA modification GTPase MnmE (Actinobacillus succinogenes (strain ATCC 55618 / DSM 22257 / CCUG 43843 / 130Z)).